The sequence spans 2368 residues: Highly reducing polyketide synthase cla2 (2368 aa).

A Ketosynthase family 3 (KS3) domain is found at 10–434; it reads QIPIAIVGLG…GTNGLVVLEA (425 aa). Active-site for beta-ketoacyl synthase activity residues include Cys182, His317, and His357. The segment at 548–877 is malonyl-CoA:ACP transacylase (MAT) domain; that stretch reads FVFTGQGAQW…RGQNALDTSL (330 aa). Ser638 (for malonyltransferase activity) is an active-site residue. The interval 936 to 1071 is N-terminal hotdog fold; the sequence is HSMIGLKQPM…GLVAIEYTNK (136 aa). Residues 936–1175 are dehydratase (DH) domain; sequence HSMIGLKQPM…AIFQSIFGST (240 aa). Residues 936 to 1255 enclose the PKS/mFAS DH domain; that stretch reads HSMIGLKQPM…MTEPEVGDDA (320 aa). The active-site Proton acceptor; for dehydratase activity is His968. Residues 1099–1255 form a C-terminal hotdog fold region; the sequence is PLMIRREKFY…MTEPEVGDDA (157 aa). Catalysis depends on Asp1165, which acts as the Proton donor; for dehydratase activity. An enoylreductase (ER) domain region spans residues 1655-1967; that stretch reads GFLDSLQFIK…QGKHRGKLVL (313 aa). The catalytic ketoreductase (KRc) domain stretch occupies residues 1991–2170; sequence ATYLIIGGLG…AVAVNLTIIR (180 aa). Residues 2283-2360 form the Carrier domain; that stretch reads QASEIITEGL…VLAKTIASRS (78 aa). Ser2320 carries the post-translational modification O-(pantetheine 4'-phosphoryl)serine.

It functions in the pathway secondary metabolite biosynthesis. Functionally, highly reducing polyketide synthase; part of the gene cluster that mediates the biosynthesis of cladosporin, a tricyclic octaketide that acts as an antimalarial agent though inhibition of the Plasmodium falciparum lysyl-tRNA synthetase. The highly reducing polyketide synthase cla2 is responsible for biosynthesis up to the pentaketide stage, including of the tetrahydropyran (THP) ring, whereas the three subsequent ketide extensions with no reduction are catalyzed by the non-reducing polyketide synthase cla3. This chain is Highly reducing polyketide synthase cla2, found in Cladosporium cladosporioides.